The following is a 324-amino-acid chain: Glyoxylate/hydroxypyruvate reductase B (324 aa).

Active-site residues include R237 and E266. H285 functions as the Proton donor in the catalytic mechanism.

The protein belongs to the D-isomer specific 2-hydroxyacid dehydrogenase family. GhrB subfamily. As to quaternary structure, homodimer.

It localises to the cytoplasm. It catalyses the reaction glycolate + NADP(+) = glyoxylate + NADPH + H(+). The enzyme catalyses (R)-glycerate + NAD(+) = 3-hydroxypyruvate + NADH + H(+). The catalysed reaction is (R)-glycerate + NADP(+) = 3-hydroxypyruvate + NADPH + H(+). Catalyzes the NADPH-dependent reduction of glyoxylate and hydroxypyruvate into glycolate and glycerate, respectively. In Escherichia coli (strain ATCC 8739 / DSM 1576 / NBRC 3972 / NCIMB 8545 / WDCM 00012 / Crooks), this protein is Glyoxylate/hydroxypyruvate reductase B.